Reading from the N-terminus, the 154-residue chain is Putative hydrogenase maturation protease MJ0253 (154 aa).

This sequence belongs to the peptidase A31 family.

The protein is Putative hydrogenase maturation protease MJ0253 of Methanocaldococcus jannaschii (strain ATCC 43067 / DSM 2661 / JAL-1 / JCM 10045 / NBRC 100440) (Methanococcus jannaschii).